A 402-amino-acid polypeptide reads, in one-letter code: Protein arginine methyltransferase NDUFAF7 homolog, mitochondrial (402 aa).

The protein belongs to the NDUFAF7 family.

Its subcellular location is the mitochondrion. The catalysed reaction is L-arginyl-[protein] + 2 S-adenosyl-L-methionine = N(omega),N(omega)'-dimethyl-L-arginyl-[protein] + 2 S-adenosyl-L-homocysteine + 2 H(+). Functionally, arginine methyltransferase involved in the assembly or stability of mitochondrial NADH:ubiquinone oxidoreductase complex (complex I). This chain is Protein arginine methyltransferase NDUFAF7 homolog, mitochondrial, found in Saccharomyces cerevisiae (strain ATCC 204508 / S288c) (Baker's yeast).